The primary structure comprises 196 residues: dTTP/UTP pyrophosphatase (196 aa).

Aspartate 72 functions as the Proton acceptor in the catalytic mechanism.

It belongs to the Maf family. YhdE subfamily. Requires a divalent metal cation as cofactor.

It localises to the cytoplasm. The enzyme catalyses dTTP + H2O = dTMP + diphosphate + H(+). It catalyses the reaction UTP + H2O = UMP + diphosphate + H(+). Nucleoside triphosphate pyrophosphatase that hydrolyzes dTTP and UTP. May have a dual role in cell division arrest and in preventing the incorporation of modified nucleotides into cellular nucleic acids. The chain is dTTP/UTP pyrophosphatase from Chlamydia trachomatis serovar A (strain ATCC VR-571B / DSM 19440 / HAR-13).